The following is a 210-amino-acid chain: Small ribosomal subunit protein uS5 (210 aa).

Positions 1–23 (MARTPSSDRPERGRGGERGDRPN) are enriched in basic and acidic residues. A disordered region spans residues 1–40 (MARTPSSDRPERGRGGERGDRPNRGRGGAEQTPREREESE). An S5 DRBM domain is found at 41–104 (FVDKLVHINR…EQAKRNMIKI (64 aa)).

The protein belongs to the universal ribosomal protein uS5 family. As to quaternary structure, part of the 30S ribosomal subunit. Contacts proteins S4 and S8.

In terms of biological role, with S4 and S12 plays an important role in translational accuracy. Functionally, located at the back of the 30S subunit body where it stabilizes the conformation of the head with respect to the body. In Paramagnetospirillum magneticum (strain ATCC 700264 / AMB-1) (Magnetospirillum magneticum), this protein is Small ribosomal subunit protein uS5.